Here is a 222-residue protein sequence, read N- to C-terminus: 2-C-methyl-D-erythritol 4-phosphate cytidylyltransferase (222 aa).

The protein belongs to the IspD/TarI cytidylyltransferase family. IspD subfamily.

It carries out the reaction 2-C-methyl-D-erythritol 4-phosphate + CTP + H(+) = 4-CDP-2-C-methyl-D-erythritol + diphosphate. Its pathway is isoprenoid biosynthesis; isopentenyl diphosphate biosynthesis via DXP pathway; isopentenyl diphosphate from 1-deoxy-D-xylulose 5-phosphate: step 2/6. Its function is as follows. Catalyzes the formation of 4-diphosphocytidyl-2-C-methyl-D-erythritol from CTP and 2-C-methyl-D-erythritol 4-phosphate (MEP). The polypeptide is 2-C-methyl-D-erythritol 4-phosphate cytidylyltransferase (Thermotoga sp. (strain RQ2)).